Here is a 263-residue protein sequence, read N- to C-terminus: Hydroxyethylthiazole kinase (263 aa).

A substrate-binding site is contributed by methionine 41. 2 residues coordinate ATP: arginine 117 and threonine 163. Glycine 190 contacts substrate.

It belongs to the Thz kinase family. The cofactor is Mg(2+).

The enzyme catalyses 5-(2-hydroxyethyl)-4-methylthiazole + ATP = 4-methyl-5-(2-phosphooxyethyl)-thiazole + ADP + H(+). It functions in the pathway cofactor biosynthesis; thiamine diphosphate biosynthesis; 4-methyl-5-(2-phosphoethyl)-thiazole from 5-(2-hydroxyethyl)-4-methylthiazole: step 1/1. In terms of biological role, catalyzes the phosphorylation of the hydroxyl group of 4-methyl-5-beta-hydroxyethylthiazole (THZ). This chain is Hydroxyethylthiazole kinase, found in Exiguobacterium sp. (strain ATCC BAA-1283 / AT1b).